The chain runs to 540 residues: Acyl-CoA synthetase 7 (540 aa).

ATP contacts are provided by residues 186–194 (SSGTTGKPK), Asp415, Arg430, and Lys522. A Microbody targeting signal motif is present at residues 538–540 (AKL).

It belongs to the ATP-dependent AMP-binding enzyme family. Expressed in intestine.

The protein localises to the peroxisome. It carries out the reaction nonanoate + ATP + CoA = nonanoyl-CoA + AMP + diphosphate. The enzyme catalyses IC-asc-C7 + ATP + CoA = IC-asc-C7-CoA + AMP + diphosphate. The catalysed reaction is IC-asc-C9 + ATP + CoA = IC-asc-C9-CoA + AMP + diphosphate. Plays a role in ascaroside pheromones biosynthesis, which regulates development and behavior. Specifically, activates the side chain of medium-chain indol-3-carbonyl (IC)-ascarosides for shortening through beta-oxidation. Converts IC-asc-C7 and IC-asc-C9 into IC-asc-C7-CoA and IC-asc-C9-CoA, respectively. May play a role in fatty-acid metabolism by activating and converting nonanoate (C9) into nonanoyl-CoA (C9-CoA). In Caenorhabditis elegans, this protein is Acyl-CoA synthetase 7.